Here is a 477-residue protein sequence, read N- to C-terminus: Bifunctional protein HldE (477 aa).

A ribokinase region spans residues 1–318 (MKVNLPAFER…ENAVRGRADT (318 aa)). Residue 195 to 198 (NLSE) coordinates ATP. The active site involves Asp-264. The interval 344–477 (MTNGVFDILH…IKKIQTESEK (134 aa)) is cytidylyltransferase.

The protein in the N-terminal section; belongs to the carbohydrate kinase PfkB family. This sequence in the C-terminal section; belongs to the cytidylyltransferase family. Homodimer.

It carries out the reaction D-glycero-beta-D-manno-heptose 7-phosphate + ATP = D-glycero-beta-D-manno-heptose 1,7-bisphosphate + ADP + H(+). The catalysed reaction is D-glycero-beta-D-manno-heptose 1-phosphate + ATP + H(+) = ADP-D-glycero-beta-D-manno-heptose + diphosphate. It functions in the pathway nucleotide-sugar biosynthesis; ADP-L-glycero-beta-D-manno-heptose biosynthesis; ADP-L-glycero-beta-D-manno-heptose from D-glycero-beta-D-manno-heptose 7-phosphate: step 1/4. It participates in nucleotide-sugar biosynthesis; ADP-L-glycero-beta-D-manno-heptose biosynthesis; ADP-L-glycero-beta-D-manno-heptose from D-glycero-beta-D-manno-heptose 7-phosphate: step 3/4. Functionally, catalyzes the phosphorylation of D-glycero-D-manno-heptose 7-phosphate at the C-1 position to selectively form D-glycero-beta-D-manno-heptose-1,7-bisphosphate. In terms of biological role, catalyzes the ADP transfer from ATP to D-glycero-beta-D-manno-heptose 1-phosphate, yielding ADP-D-glycero-beta-D-manno-heptose. The chain is Bifunctional protein HldE from Salmonella dublin (strain CT_02021853).